The sequence spans 658 residues: Protein cueball (658 aa).

The Extracellular segment spans residues 1–543 (MSGVTARMEN…SYCKNSFNRT (543 aa)). 2 N-linked (GlcNAc...) asparagine glycosylation sites follow: asparagine 25 and asparagine 122. 3 LDL-receptor class B repeats span residues 100 to 142 (RKLY…NHDL), 152 to 195 (RHLY…DHYS), and 196 to 241 (NRIY…NSRY). EGF-like domains follow at residues 352–384 (EIPI…FEGE), 387–422 (DRSK…KRCE), and 458–495 (EEYT…KRCE). 8 cysteine pairs are disulfide-bonded: cysteine 356–cysteine 365, cysteine 360–cysteine 375, cysteine 391–cysteine 401, cysteine 395–cysteine 410, cysteine 412–cysteine 421, cysteine 462–cysteine 472, cysteine 466–cysteine 483, and cysteine 485–cysteine 494. N-linked (GlcNAc...) asparagine glycosylation is found at asparagine 400 and asparagine 415. A glycan (N-linked (GlcNAc...) asparagine) is linked at asparagine 476. A glycan (N-linked (GlcNAc...) asparagine) is linked at asparagine 541. Residues 544 to 564 (VVYASLAFAASLFILMVILLI) traverse the membrane as a helical segment. Over 565-658 (VRRFYEEGRP…SCAGGDKNLP (94 aa)) the chain is Cytoplasmic.

It belongs to the cueball family.

It localises to the cell membrane. Functionally, has a role in spermatogenesis and oogenesis. The sequence is that of Protein cueball from Culex quinquefasciatus (Southern house mosquito).